The sequence spans 99 residues: Putative septation protein SpoVG (99 aa).

It belongs to the SpoVG family.

Functionally, could be involved in septation. The chain is Putative septation protein SpoVG from Aster yellows witches'-broom phytoplasma (strain AYWB).